Consider the following 498-residue polypeptide: Probable cytosol aminopeptidase (498 aa).

Lys-264 and Asp-269 together coordinate Mn(2+). The active site involves Lys-276. The Mn(2+) site is built by Asp-287, Asp-346, and Glu-348. The active site involves Arg-350.

It belongs to the peptidase M17 family. It depends on Mn(2+) as a cofactor.

It localises to the cytoplasm. The catalysed reaction is Release of an N-terminal amino acid, Xaa-|-Yaa-, in which Xaa is preferably Leu, but may be other amino acids including Pro although not Arg or Lys, and Yaa may be Pro. Amino acid amides and methyl esters are also readily hydrolyzed, but rates on arylamides are exceedingly low.. It catalyses the reaction Release of an N-terminal amino acid, preferentially leucine, but not glutamic or aspartic acids.. Functionally, presumably involved in the processing and regular turnover of intracellular proteins. Catalyzes the removal of unsubstituted N-terminal amino acids from various peptides. This chain is Probable cytosol aminopeptidase, found in Brucella anthropi (strain ATCC 49188 / DSM 6882 / CCUG 24695 / JCM 21032 / LMG 3331 / NBRC 15819 / NCTC 12168 / Alc 37) (Ochrobactrum anthropi).